The following is a 143-amino-acid chain: Large ribosomal subunit protein uL11 (143 aa).

The protein belongs to the universal ribosomal protein uL11 family. As to quaternary structure, part of the ribosomal stalk of the 50S ribosomal subunit. Interacts with L10 and the large rRNA to form the base of the stalk. L10 forms an elongated spine to which L12 dimers bind in a sequential fashion forming a multimeric L10(L12)X complex. Post-translationally, one or more lysine residues are methylated.

Functionally, forms part of the ribosomal stalk which helps the ribosome interact with GTP-bound translation factors. This is Large ribosomal subunit protein uL11 from Borreliella afzelii (strain PKo) (Borrelia afzelii).